Consider the following 409-residue polypeptide: Phenoxybenzoate dioxygenase subunit alpha (409 aa).

One can recognise a Rieske domain in the interval 45–149; it reads WQPVALSADV…VEERYGLVFA (105 aa). Residues Cys85, His87, Cys104, and His107 each contribute to the [2Fe-2S] cluster site. Residues His210 and His215 each contribute to the Fe cation site.

It belongs to the bacterial ring-hydroxylating dioxygenase alpha subunit family. As to quaternary structure, this dioxygenase system consists of two proteins: the alpha subunit (PobA) and a subunit (PobB) that acts as a ferredoxin and a ferredoxin reductase. Requires [2Fe-2S] cluster as cofactor. Fe cation serves as cofactor.

It participates in aromatic compound metabolism; carboxydiphenyl ether degradation. Degrades exclusively diarylether compounds having carboxyl groups in the 3- or 4-position. Yields a hemiacetal that spontaneously hydrolyzes to phenol and protocatechuate. This is Phenoxybenzoate dioxygenase subunit alpha (pobA) from Ectopseudomonas oleovorans (Pseudomonas oleovorans).